The chain runs to 443 residues: Intermediate filament protein ifd-2 (443 aa).

The tract at residues 1–58 (MTDPLNPTRLQNHPALARIIESGRTNLPTGITTSGALSAYAQNAAAIIRDNREREKVE) is head. Residues 55-405 (EKVEIADLNN…KLMENAEHLR (351 aa)) enclose the IF rod domain. The interval 59–90 (IADLNNRLARYVEKVRFLEAQNRVLENDIGVF) is coil 1A. A linker 1 region spans residues 91-104 (RNAAHTHSERIAVY). Residues 105-239 (FESEKASLFT…SQHDIAIREE (135 aa)) form a coil 1B region. The segment at 240–257 (ISKARRDTTNKNRDYFHN) is linker 12. Positions 258–403 (ELHAAMKEIR…YRKLMENAEH (146 aa)) are coil 2. Residues 404–443 (LRTTVQTHVTYNAPPPPLPQSGPRTTSYHAYGSAYNDSLL) form a tail region.

This sequence belongs to the intermediate filament family.

Its subcellular location is the cytoplasm. Cytoplasmic intermediate filaments provide mechanical strength to cells. Not essential protein. This chain is Intermediate filament protein ifd-2 (ifd-2), found in Caenorhabditis elegans.